The chain runs to 389 residues: MSVIKMTDLDLAGKRVFIRADLNVPVKEGKVTSDARIKATIPTLKLALEKGAKVMVTSHLGRPTEGEFKPEDSLQPVVDYLKGAGFNVRLAQDYLNGVEVNEGEIVVLENVRVNKGEKKNDPELSKKYAALCDVFVMDAFGTAHRAQASTYGVAEFAPVACAGPLLAAELEALGKALKEPQRPMLAIVGGSKVSTKLTVLDSLSKIADQLIVGGGIANTFIAAEGHNVGKSLYEADLIPEAQRLSKVTNIPVPVDVRVGTEFSETALSTEKSVADVSGEESIFDIGDKSAEQLADIIRNAKTILWNGPVGVFEFPNFRKGTEIVSNAIAEATANGAFSIAGGGDTLAAIDLFGIKDKISYISTGGGAFLEFVEGKVLPAVEILEKRANG.

Substrate-binding positions include 21-23 (DLN), arginine 36, 59-62 (HLGR), arginine 112, and arginine 145. ATP-binding positions include lysine 196, glutamate 313, and 342-345 (GGDT).

Belongs to the phosphoglycerate kinase family. In terms of assembly, monomer.

It is found in the cytoplasm. It carries out the reaction (2R)-3-phosphoglycerate + ATP = (2R)-3-phospho-glyceroyl phosphate + ADP. It participates in carbohydrate degradation; glycolysis; pyruvate from D-glyceraldehyde 3-phosphate: step 2/5. The sequence is that of Phosphoglycerate kinase from Histophilus somni (strain 2336) (Haemophilus somnus).